The chain runs to 342 residues: MEPAGGAPRESARAEALLGELEARVQEVVRASSWWERHGVDCAILALSLLALPPGFLCLRSDSPLVFALGITILGVCHYTLTVKGSHLATHGALTESRGWSKVWTLFFVEVCTSFTAEYAKYGHVKMHHGYTNVLGLGDSSTWRLPCLNRYVYMFLAPLLIPIITPLVAVERLREVELRTALRTLGLISLGLYSQYWLLLNVSGFQSPSSALACMLITRSLLAHPYLHVNIFQHIGLPMFSPDKKPRRIHMMSLGVLNLPRLPVLDWAFGHSLISCHVEHHLFPRLSDNMCLKVKPVVSQFLHEKQLPYNEDSYLARFWLFLQRYEEFMVQTPPITELVGLQ.

2 helical membrane passes run 39 to 59 and 63 to 83; these read GVDC…FLCL and SPLV…TLTV. A Histidine box-1 motif is present at residues 87–91; sequence HLATH. The short motif at 124–128 is the Histidine box-2 element; the sequence is HVKMH. The next 2 helical transmembrane spans lie at 151-171 and 185-205; these read YVYM…VAVE and LGLI…VSGF. Residues 277 to 281 carry the Histidine box-3 motif; it reads HVEHH.

This sequence belongs to the fatty acid desaturase type 1 family.

It localises to the membrane. The protein operates within lipid metabolism; fatty acid metabolism. This is Fatty acid desaturase 6 (FADS6) from Bos taurus (Bovine).